The sequence spans 435 residues: MTSAARKVSVLLGAQWGDEGKGKIIDFLIENHKINVTARCQGGNNAGHTVVANGRKYDFHILPSGIISPTCFNVIGNGVVVNLDAFFSELAHNGVLSEPGWEKRIMISSEAHLVFGVHSQVDGRQEDSLAAKNKIGTTNRGIGPTYSSKCFRNGIRVADLMADFEEFSEKYRRLVEHYKKQFPSIEVDVDGELARFKEHREKLAELKLVGDTVGFIHEQRTNGKQVLIEGANGALLDIDFGTYPYVTSSNSTVGGACTGLGVPPTAIGSVIGVVKAYQTRVGTGPFPTELFDADGEKLQSIGKEVGVTTGRKRRCGWIDLFLLRRSAMINGYTDIALTKLDILDTFPTIKVAVGYKLNGQTLTAPPAQTNAWGAVEVEYKEFEGWMEPTVGVRKYEDLPEKCRQYIQFIEEFIKVPIVYIGVGAERESLIVRQKQ.

GTP is bound by residues 17-23 (GDEGKGK) and 47-49 (GHT). D18 functions as the Proton acceptor in the catalytic mechanism. The Mg(2+) site is built by D18 and G47. Residues 18–21 (DEGK), 45–48 (NAGH), T138, R152, N232, T247, and R311 each bind IMP. The active-site Proton donor is H48. Substrate is bound at residue 307–313 (VTTGRKR). GTP-binding positions include R313, 339 to 341 (KLD), and 421 to 423 (GVG).

It belongs to the adenylosuccinate synthetase family. In terms of assembly, homodimer. It depends on Mg(2+) as a cofactor.

It is found in the cytoplasm. The catalysed reaction is IMP + L-aspartate + GTP = N(6)-(1,2-dicarboxyethyl)-AMP + GDP + phosphate + 2 H(+). It participates in purine metabolism; AMP biosynthesis via de novo pathway; AMP from IMP: step 1/2. Functionally, plays an important role in the de novo pathway and in the salvage pathway of purine nucleotide biosynthesis. Catalyzes the first committed step in the biosynthesis of AMP from IMP. This Caenorhabditis briggsae protein is Adenylosuccinate synthetase.